Here is a 124-residue protein sequence, read N- to C-terminus: Small ribosomal subunit protein uS13 (124 aa).

Residues 95–124 form a disordered region; it reads GLPVRGQRTKTNARTRKGPKRTVAGKKKAR.

The protein belongs to the universal ribosomal protein uS13 family. In terms of assembly, part of the 30S ribosomal subunit. Forms a loose heterodimer with protein S19. Forms two bridges to the 50S subunit in the 70S ribosome.

Functionally, located at the top of the head of the 30S subunit, it contacts several helices of the 16S rRNA. In the 70S ribosome it contacts the 23S rRNA (bridge B1a) and protein L5 of the 50S subunit (bridge B1b), connecting the 2 subunits; these bridges are implicated in subunit movement. Contacts the tRNAs in the A and P-sites. This chain is Small ribosomal subunit protein uS13, found in Leifsonia xyli subsp. xyli (strain CTCB07).